Here is a 267-residue protein sequence, read N- to C-terminus: Alpha carbonic anhydrase 4 (267 aa).

The signal sequence occupies residues 1-26 (MDTNAKTIFFMAMCFIYLSFPNISHA). Residue asparagine 22 is glycosylated (N-linked (GlcNAc...) asparagine). Residues 34 to 264 (TPFTYEQKTE…SKGRSVWFYD (231 aa)) form the Alpha-carbonic anhydrase domain. Residues cysteine 59 and cysteine 214 are joined by a disulfide bond. The Proton acceptor role is filled by histidine 99. Zn(2+) contacts are provided by histidine 125 and histidine 127. Asparagine 135 is a glycosylation site (N-linked (GlcNAc...) asparagine). Histidine 144 contacts Zn(2+). 210 to 211 (TV) provides a ligand contact to substrate.

It belongs to the alpha-class carbonic anhydrase family. Requires Zn(2+) as cofactor. In terms of processing, N-glycosylated.

It localises to the plastid. The protein resides in the chloroplast stroma. The enzyme catalyses hydrogencarbonate + H(+) = CO2 + H2O. In terms of biological role, reversible hydration of carbon dioxide. This Arabidopsis thaliana (Mouse-ear cress) protein is Alpha carbonic anhydrase 4 (ACA4).